An 87-amino-acid polypeptide reads, in one-letter code: uncharacterized protein (87 aa).

A signal peptide spans 1–19 (MLVLLVAVLVTAVYAFVHA). Residues 39–59 (LVILGAAVALASILYPVLGVL) form a helical membrane-spanning segment.

The protein to M.leprae ML2453.

The protein localises to the membrane. This is an uncharacterized protein from Mycobacterium bovis (strain ATCC BAA-935 / AF2122/97).